The primary structure comprises 283 residues: Bifunctional protein FolD (283 aa).

166 to 168 (GAS) provides a ligand contact to NADP(+).

It belongs to the tetrahydrofolate dehydrogenase/cyclohydrolase family. Homodimer.

The catalysed reaction is (6R)-5,10-methylene-5,6,7,8-tetrahydrofolate + NADP(+) = (6R)-5,10-methenyltetrahydrofolate + NADPH. The enzyme catalyses (6R)-5,10-methenyltetrahydrofolate + H2O = (6R)-10-formyltetrahydrofolate + H(+). The protein operates within one-carbon metabolism; tetrahydrofolate interconversion. Its function is as follows. Catalyzes the oxidation of 5,10-methylenetetrahydrofolate to 5,10-methenyltetrahydrofolate and then the hydrolysis of 5,10-methenyltetrahydrofolate to 10-formyltetrahydrofolate. In Coxiella burnetii (strain CbuG_Q212) (Coxiella burnetii (strain Q212)), this protein is Bifunctional protein FolD.